The following is a 275-amino-acid chain: Diaminopimelate epimerase (275 aa).

Substrate contacts are provided by Asn-12, Gln-45, and Asn-65. Cys-74 serves as the catalytic Proton donor. Residues 75-76, Asn-158, Asn-191, and 209-210 contribute to the substrate site; these read GN and ER. Cys-218 (proton acceptor) is an active-site residue. 219-220 is a substrate binding site; the sequence is GT.

Belongs to the diaminopimelate epimerase family. As to quaternary structure, homodimer.

The protein localises to the cytoplasm. The enzyme catalyses (2S,6S)-2,6-diaminopimelate = meso-2,6-diaminopimelate. The protein operates within amino-acid biosynthesis; L-lysine biosynthesis via DAP pathway; DL-2,6-diaminopimelate from LL-2,6-diaminopimelate: step 1/1. Its function is as follows. Catalyzes the stereoinversion of LL-2,6-diaminopimelate (L,L-DAP) to meso-diaminopimelate (meso-DAP), a precursor of L-lysine and an essential component of the bacterial peptidoglycan. This Shewanella oneidensis (strain ATCC 700550 / JCM 31522 / CIP 106686 / LMG 19005 / NCIMB 14063 / MR-1) protein is Diaminopimelate epimerase.